A 1208-amino-acid polypeptide reads, in one-letter code: MSERDFNTQSPKFKDENANSVISQSDFLGKSLKNNNDDYSDFRGSYLNDKSSFQTPLRNGSYQPKGSLEFTPLLQSSNKNSDKYNGSLGDKGSFDPNSYGLSAISKQATQEALSISQGNDSYDVSKLTDLSKNSEIDHTDGELPANAALTLREQEKVLEKVSRENFGLRIKIVCLEKRLESMAPEQIKEAVKDNVELHAERANLQLQLKRTESLLQKSEDKNFKLEEKVDYLSKVNDVEQSQNVKVFTERIRFLENALEKVQREKDSLSTEMEEDKSNKEVDYEYEIRQLQNRLDELSEELDVAQDLLTEKEDEIATLKRQIEEKENSSSAFENEENSSYVHLQEDYAILQAKCDEFADRIQVLTADLEKEKENQIMHESEASIGLTDSMQVHTLQEQLHKANEEIEFLHDQISRMNEEGKNFEDIMLQFRSLEEERDVLESKLQTLEDDNNSLRLMTSSLGNQIESLRTQNREIDEEKNHLRLLASKNSDKALAETNIRLQEVTKELETLRMKNSNDLNEIHDLREENEGLTLKIDSITKEKDRLINELEQRIKSYEVNVSELNGTIDEYRNKLKDKEETYNEVMNAFQYKDNDLRRFHESINKLQDREKELTSNLEKKNLVISSLRETVAMLEKERESIKKYLSGNAKDLDNTNLMEILNDKISVLQRQLTDVKDELDVSEEEREEAIVAGQKLSASFELMSNEKQALELKYSSLKNELINAQNLLDRREEELSELSKKLFEERKIRSGSNDDIEKNKEINVLNSELADKLAQIRHLESDKMELDKLVHHLNRGIEEANIEENAVKKRLCLLMGCDYSSVSILQIVSQIEHFVNQQIQTIRSLKQELRHDFVQFSGKKEQELSRSFEKFGLGTETKHDILAQRNRNVSEKMNDLENAAQKFFSSPDRKNGYLYPSEHTSKIEYLEKTIEDLKLALQDELKNRNLLMDDISSYNKQTTKLQEKIKWLERERSILIDELESYRSNQFNYQNNLVQDKNELEERLKEIQKELEVYNNHFMKQAELMTSNVTDESQLMLKTLREALQSKTNNIDHLSTILERNRKEYKSLLDDYNQLRARYKNLQSNTPQSTQSGQYESEIKGLSKLTKYLQSKCRREHSLRLDLAFSKKFILMQLTGYETCNKINLRMLQKIGISPDPDLSKKHIKLKSLIIVVCSIERMKRMKNEWLKQAQLKQSLQRAAAKAKTANY.

The segment covering 1–17 (MSERDFNTQSPKFKDEN) has biased composition (basic and acidic residues). Residues 1-91 (MSERDFNTQS…DKYNGSLGDK (91 aa)) are disordered. Over residues 48–64 (NDKSSFQTPLRNGSYQP) the composition is skewed to polar residues. Coiled coils occupy residues 151-375 (LREQ…KENQ), 387-803 (TDSM…ANIE), 874-1091 (GTET…QSTQ), and 1177-1204 (ERMK…AKAK). S906 bears the Phosphoserine mark.

Interacts with ccq1.

Its subcellular location is the nucleus. The protein resides in the cytoplasm. It localises to the cytoskeleton. It is found in the microtubule organizing center. The protein localises to the spindle pole body. Its function is as follows. Spindle pole body component that binds calmodulin. Overexpression of pcp1 causes the formation of supernumerary SPB-like structures and disrupts both mitotic spindle assembly and chromosome segregation. The polypeptide is Spindle pole body protein pcp1 (pcp1) (Schizosaccharomyces pombe (strain 972 / ATCC 24843) (Fission yeast)).